Consider the following 349-residue polypeptide: Phosphoribosylformylglycinamidine cyclo-ligase (349 aa).

Belongs to the AIR synthase family.

It localises to the cytoplasm. The catalysed reaction is 2-formamido-N(1)-(5-O-phospho-beta-D-ribosyl)acetamidine + ATP = 5-amino-1-(5-phospho-beta-D-ribosyl)imidazole + ADP + phosphate + H(+). It functions in the pathway purine metabolism; IMP biosynthesis via de novo pathway; 5-amino-1-(5-phospho-D-ribosyl)imidazole from N(2)-formyl-N(1)-(5-phospho-D-ribosyl)glycinamide: step 2/2. The protein is Phosphoribosylformylglycinamidine cyclo-ligase of Methanococcus maripaludis (strain C6 / ATCC BAA-1332).